The primary structure comprises 400 residues: MGGWSSKPRQGMGTNLSVPNPLGFFPDHQLDPAFGANSNNPDWDFNPNKDHWPEANQVGAGAFGPGFTPPHGGLLGWSPQAQGILTTVPAAPPPASTNRQSGRQPTPISPPLRDSHPQAMQWNSTTFHQALLDPRVKGLYFPAGGSSSGTVNPVPTTASPISSIFSRTGDPAPNMESTTSGFLGPLLVLQAGFFLLTRILTIPQSLDSWWTSLNFLGGAPTCPGQNSQSPTSNHSPTSCPPICPGYRWMCLRRFIIFLFILLLCLIFLLVLLDFQGMLPVCPLLPGTSTTSTGPCKTCTIPAQGTSMFPSCCCTKPSDGNCTCIPIPSSWAFARFLWEWASVRFSWLSLLVPFVQWFAGLSPTVWLSVIWMMWYWGPSLYNILSPFLPLLPIFFCLWVYI.

Residue Met1 is modified to N-acetylmethionine. 2 disordered regions span residues 1-55 (MGGW…WPEA) and 85-118 (LTTV…SHPQ). Residue Gly2 is the site of N-myristoyl glycine; by host attachment. The tract at residues 2 to 119 (GGWSSKPRQG…PPLRDSHPQA (118 aa)) is pre-S1. A pre-S region spans residues 2–174 (GGWSSKPRQG…FSRTGDPAPN (173 aa)). At 2 to 181 (GGWSSKPRQG…APNMESTTSG (180 aa)) the chain is on the virion surface; in external conformation side. Over 2–253 (GGWSSKPRQG…PGYRWMCLRR (252 aa)) the chain is Intravirion; in internal conformation. N-linked (GlcNAc...) asparagine glycosylation occurs at Trp4. Residues 96–106 (STNRQSGRQPT) are compositionally biased toward polar residues. Residues 120–174 (MQWNSTTFHQALLDPRVKGLYFPAGGSSSGTVNPVPTTASPISSIFSRTGDPAPN) form a pre-S2 region. A helical transmembrane segment spans residues 182–202 (FLGPLLVLQAGFFLLTRILTI). The Intravirion; in external conformation portion of the chain corresponds to 203-253 (PQSLDSWWTSLNFLGGAPTCPGQNSQSPTSNHSPTSCPPICPGYRWMCLRR). The chain crosses the membrane as a helical span at residues 254-274 (FIIFLFILLLCLIFLLVLLDF). Topologically, residues 275 to 348 (QGMLPVCPLL…WASVRFSWLS (74 aa)) are virion surface. Residue Asn320 is glycosylated (N-linked (GlcNAc...) asparagine; by host). Residues 349–369 (LLVPFVQWFAGLSPTVWLSVI) form a helical membrane-spanning segment. The Intravirion segment spans residues 370–375 (WMMWYW). The helical transmembrane segment at 376–398 (GPSLYNILSPFLPLLPIFFCLWV) threads the bilayer. At 399–400 (YI) the chain is on the virion surface side.

The protein belongs to the orthohepadnavirus major surface antigen family. In its internal form (Li-HBsAg), interacts with the capsid protein and with the isoform S. Interacts with host chaperone CANX. As to quaternary structure, associates with host chaperone CANX through its pre-S2 N glycan; this association may be essential for isoform M proper secretion. In terms of assembly, interacts with isoform L. Interacts with the antigens of satellite virus HDV (HDVAgs); this interaction is required for encapsidation of HDV genomic RNA. In terms of processing, isoform M is N-terminally acetylated by host at a ratio of 90%, and N-glycosylated by host at the pre-S2 region. Myristoylated.

Its subcellular location is the virion membrane. Its function is as follows. The large envelope protein exists in two topological conformations, one which is termed 'external' or Le-HBsAg and the other 'internal' or Li-HBsAg. In its external conformation the protein attaches the virus to cell receptors and thereby initiating infection. This interaction determines the species specificity and liver tropism. This attachment induces virion internalization predominantly through caveolin-mediated endocytosis. The large envelope protein also assures fusion between virion membrane and endosomal membrane. In its internal conformation the protein plays a role in virion morphogenesis and mediates the contact with the nucleocapsid like a matrix protein. In terms of biological role, the middle envelope protein plays an important role in the budding of the virion. It is involved in the induction of budding in a nucleocapsid independent way. In this process the majority of envelope proteins bud to form subviral lipoprotein particles of 22 nm of diameter that do not contain a nucleocapsid. This Hepatitis B virus genotype C subtype ar (isolate Japan/S-207/1988) (HBV-C) protein is Large envelope protein.